The primary structure comprises 271 residues: Tryptophan synthase alpha chain (271 aa).

Catalysis depends on proton acceptor residues Glu49 and Asp60.

This sequence belongs to the TrpA family. As to quaternary structure, tetramer of two alpha and two beta chains.

It carries out the reaction (1S,2R)-1-C-(indol-3-yl)glycerol 3-phosphate + L-serine = D-glyceraldehyde 3-phosphate + L-tryptophan + H2O. It functions in the pathway amino-acid biosynthesis; L-tryptophan biosynthesis; L-tryptophan from chorismate: step 5/5. The alpha subunit is responsible for the aldol cleavage of indoleglycerol phosphate to indole and glyceraldehyde 3-phosphate. The polypeptide is Tryptophan synthase alpha chain (Azoarcus sp. (strain BH72)).